The following is a 186-amino-acid chain: Peptide deformylase (186 aa).

Fe cation-binding residues include Cys-94 and His-136. Glu-137 is an active-site residue. Fe cation is bound at residue His-140.

Belongs to the polypeptide deformylase family. It depends on Fe(2+) as a cofactor.

It catalyses the reaction N-terminal N-formyl-L-methionyl-[peptide] + H2O = N-terminal L-methionyl-[peptide] + formate. In terms of biological role, removes the formyl group from the N-terminal Met of newly synthesized proteins. Requires at least a dipeptide for an efficient rate of reaction. N-terminal L-methionine is a prerequisite for activity but the enzyme has broad specificity at other positions. The sequence is that of Peptide deformylase from Prosthecochloris aestuarii (strain DSM 271 / SK 413).